A 372-amino-acid polypeptide reads, in one-letter code: Cyclin-dependent kinase 9 (372 aa).

Positions 19–315 (YEKLAKIGQG…SDDALNHDFF (297 aa)) constitute a Protein kinase domain. Position 25–33 (25–33 (IGQGTFGEV)) interacts with ATP. The residue at position 44 (Lys44) is an N6-acetyllysine; by EP300/CBP, PCAF/KAT2B and GCN5/KAT2A. ATP-binding positions include Lys48 and 104–106 (DFC). Lys48 carries the N6-acetyllysine; by PCAF/KAT2B and GCN5/KAT2A modification. Asp149 (proton acceptor) is an active-site residue. The segment at 166 to 191 (ADFGLARAFSLAKNSQPNRYTNRVVT) is T-loop. Asp167 contributes to the ATP binding site. The residue at position 175 (Ser175) is a Phosphoserine. The residue at position 186 (Thr186) is a Phosphothreonine; by CaMK1D. Residues 343-372 (RRKGSQITQQSTNQSRNPATTNQTEFERVF) are disordered. Residue Ser347 is modified to Phosphoserine; by CDK9 and PKA. The segment covering 347 to 366 (SQITQQSTNQSRNPATTNQT) has biased composition (polar residues). Thr350 is subject to Phosphothreonine; by CDK9. A Phosphoserine; by CDK9 modification is found at Ser353. Thr354 is modified (phosphothreonine; by CDK9). Ser357 is subject to Phosphoserine; by CDK9. A phosphothreonine; by CDK9 mark is found at Thr362 and Thr363.

The protein belongs to the protein kinase superfamily. CMGC Ser/Thr protein kinase family. CDC2/CDKX subfamily. As to quaternary structure, component of the super elongation complex (SEC), at least composed of EAF1, EAF2, CDK9, MLLT3/AF9, AFF (AFF1 or AFF4), the P-TEFb complex and ELL (ELL, ELL2 or ELL3). Associates with CCNT1/cyclin-T1, CCNT2/cyclin-T2 (isoform A and isoform B) or CCNK/cyclin-K to form active P-TEFb. P-TEFb forms a complex with AFF4/AF5Q31 and is part of the super elongation complex (SEC). Component of a complex which is composed of at least 5 members: HTATSF1/Tat-SF1, P-TEFb complex, RNA pol II, SUPT5H, and NCL/nucleolin. Associates with UBR5 and forms a transcription regulatory complex composed of CDK9, RNAP II, UBR5 and TFIIS/TCEA1 that can stimulate target gene transcription (e.g. gamma fibrinogen/FGG) by recruiting their promoters. Component of the 7SK snRNP inactive complex which is composed of at least 8 members: P-TEFb (composed of CDK9 and CCNT1/cyclin-T1), HEXIM1, HEXIM2, LARP7, BCDIN3, SART3 proteins and 7SK and U6 snRNAs. This inactive 7SK snRNP complex can also interact with NCOR1 and HDAC3, probably to regulate CDK9 acetylation. Release of P-TEFb from P-TEFb/7SK snRNP complex requires both PP2B to transduce calcium Ca(2+) signaling in response to stimuli (e.g. UV or hexamethylene bisacetamide (HMBA)), and PPP1CA to dephosphorylate Thr-186. This released P-TEFb remains inactive in the pre-initiation complex with BRD4 until new Thr-186 phosphorylation occurs after the synthesis of a short RNA. Interacts with BRD4; to target chromatin binding. Interacts with JMJD6. Interacts with activated nuclear STAT3 and RELA/p65. Binds to AR and MYOD1. Forms a complex composed of CDK9, CCNT1/cyclin-T1, EP300 and GATA4 that stimulates hypertrophy in cardiomyocytes. The large PER complex involved in the repression of transcriptional termination is composed of at least PER2, CDK9, DDX5, DHX9, NCBP1 and POLR2A. Interacts with HSF1. Interacts with TBX21. Interacts with WDR43. Interacts with ZMYND8; the association appears to occur between homodimeric ZMYND8 and the activated form of the P-TEFb complex. Post-translationally, autophosphorylation at Thr-186, Ser-347, Thr-350, Ser-353, Thr-354 and Ser-357 triggers kinase activity by promoting cyclin and substrate binding upon conformational changes. Thr-186 phosphorylation requires the calcium Ca(2+) signaling pathway, including CaMK1D and calmodulin. This inhibition is relieved by Thr-29 dephosphorylation. Phosphorylation at Ser-175 inhibits kinase activity. Can be phosphorylated on either Thr-362 or Thr-363 but not on both simultaneously. Dephosphorylation of Thr-186 by PPM1A and PPM1B blocks CDK9 activity and may lead to CDK9 proteasomal degradation. However, PPP1CA-mediated Thr-186 dephosphorylation is required to release P-TEFb from its inactive P-TEFb/7SK snRNP complex. Dephosphorylated at Ser-347 by the PNUTS-PP1 complex during RNA polymerase II transcription pause-release. Dephosphorylation of C-terminus Thr and Ser residues by protein phosphatase-1 (PP1) triggers CDK9 activity. In terms of processing, N6-acetylation of Lys-44 promotes kinase activity, whereas acetylation of both Lys-44 and Lys-48 mediated by PCAF/KAT2B and GCN5/KAT2A reduces kinase activity. The acetylated form associates with PML bodies in the nuclear matrix and with the transcriptionally silent HIV-1 genome; deacetylated upon transcription stimulation. Deacetylated by SIRT7, promoting the kinase activity and subsequent 'Ser-2' phosphorylation of the C-terminal domain (CTD) of RNA polymerase II. Post-translationally, polyubiquitinated and thus activated by UBR5. This ubiquitination is promoted by TFIIS/TCEA1 and favors 'Ser-2' phosphorylation of RPB1/POLR2A CTD.

It localises to the nucleus. The protein localises to the cytoplasm. Its subcellular location is the PML body. It catalyses the reaction L-seryl-[protein] + ATP = O-phospho-L-seryl-[protein] + ADP + H(+). The enzyme catalyses L-threonyl-[protein] + ATP = O-phospho-L-threonyl-[protein] + ADP + H(+). It carries out the reaction [DNA-directed RNA polymerase] + ATP = phospho-[DNA-directed RNA polymerase] + ADP + H(+). With respect to regulation, activation by Thr-186 phosphorylation is calcium Ca(2+) signaling pathway-dependent; actively inactivated by dephosphorylation mediated by PPP1CA, PPM1A and PPM1B. Reversibly repressed by acetylation at Lys-44 and Lys-48. In terms of biological role, protein kinase involved in the regulation of transcription. Member of the cyclin-dependent kinase pair (CDK9/cyclin-T) complex, also called positive transcription elongation factor b (P-TEFb), which facilitates the transition from abortive to productive elongation by phosphorylating the CTD (C-terminal domain) of the large subunit of RNA polymerase II (RNAP II) POLR2A, SUPT5H and RDBP. This complex is inactive when in the 7SK snRNP complex form. Phosphorylates EP300, MYOD1, RPB1/POLR2A and AR and the negative elongation factors DSIF and NELFE. Regulates cytokine inducible transcription networks by facilitating promoter recognition of target transcription factors (e.g. TNF-inducible RELA/p65 activation and IL-6-inducible STAT3 signaling). Promotes RNA synthesis in genetic programs for cell growth, differentiation and viral pathogenesis. P-TEFb is also involved in cotranscriptional histone modification, mRNA processing and mRNA export. Modulates a complex network of chromatin modifications including histone H2B monoubiquitination (H2Bub1), H3 lysine 4 trimethylation (H3K4me3) and H3K36me3; integrates phosphorylation during transcription with chromatin modifications to control co-transcriptional histone mRNA processing. The CDK9/cyclin-K complex has also a kinase activity towards CTD of RNAP II and can substitute for CDK9/cyclin-T P-TEFb in vitro. Replication stress response protein; the CDK9/cyclin-K complex is required for genome integrity maintenance, by promoting cell cycle recovery from replication arrest and limiting single-stranded DNA amount in response to replication stress, thus reducing the breakdown of stalled replication forks and avoiding DNA damage. In addition, probable function in DNA repair of isoform 2 via interaction with KU70/XRCC6. Promotes cardiac myocyte enlargement. RPB1/POLR2A phosphorylation on 'Ser-2' in CTD activates transcription. AR phosphorylation modulates AR transcription factor promoter selectivity and cell growth. DSIF and NELF phosphorylation promotes transcription by inhibiting their negative effect. The phosphorylation of MYOD1 enhances its transcriptional activity and thus promotes muscle differentiation. Catalyzes phosphorylation of KAT5, promoting KAT5 recruitment to chromatin and histone acetyltransferase activity. In Bos taurus (Bovine), this protein is Cyclin-dependent kinase 9 (CDK9).